Here is a 128-residue protein sequence, read N- to C-terminus: Fluoride-specific ion channel FluC (128 aa).

The next 4 helical transmembrane spans lie at 3-23 (FSVI…RFLI), 34-54 (LFPV…GFLY), 69-89 (FITG…ETLL), and 100-120 (FLNI…AIIL). Residues G75 and T78 each contribute to the Na(+) site.

Belongs to the fluoride channel Fluc/FEX (TC 1.A.43) family.

It is found in the cell inner membrane. It catalyses the reaction fluoride(in) = fluoride(out). Its activity is regulated as follows. Na(+) is not transported, but it plays an essential structural role and its presence is essential for fluoride channel function. Its function is as follows. Fluoride-specific ion channel. Important for reducing fluoride concentration in the cell, thus reducing its toxicity. This Nitratiruptor sp. (strain SB155-2) protein is Fluoride-specific ion channel FluC.